Consider the following 574-residue polypeptide: Ankyrin repeat protein B18 (574 aa).

ANK repeat units follow at residues 56 to 87 (TGYTALHCYLYNNYFTNDVLKILLNHGVDVTM), 135 to 164 (IKSRYMLLKEEDIDENIVSTLLDKGIDPNF), 167 to 213 (DGYT…NLNA), 217 to 249 (CGNTPFHLYLSIEMCNNIHMTKMLLTFNPNFKI), 253 to 285 (HGLTPILCYITSDYIQHDILVMLIHHYETNVGE), and 327 to 356 (EGKTLLHVACEYNNTHVIDYLIRINGDINA). Residues 541 to 574 (NCLLTLLPSEIIYEILYMLTINDLYNISYPPTKV) enclose the F-box domain.

The chain is Ankyrin repeat protein B18 from Vaccinia virus (strain Ankara) (VACV).